A 301-amino-acid chain; its full sequence is Hepatitis A virus cellular receptor 2 (301 aa).

The first 21 residues, 1 to 21, serve as a signal peptide directing secretion; the sequence is MFSHLPFDCVLLLLLLLLTRS. The Ig-like V-type domain occupies 22–124; that stretch reads SEVEYRAEVG…PGIMNDEKFN (103 aa). At 22–202 the chain is on the extracellular side; sequence SEVEYRAEVG…RDSGATIRIG (181 aa). 3 cysteine pairs are disulfide-bonded: Cys38–Cys110, Cys52–Cys63, and Cys58–Cys109. A 1,2-diacyl-sn-glycero-3-phospho-L-serine is bound at residue Arg111. Gly116 provides a ligand contact to Ca(2+). Met118 is an a 1,2-diacyl-sn-glycero-3-phospho-L-serine binding site. A Ca(2+)-binding site is contributed by Asn119. O-linked (GalNAc...) threonine glycosylation occurs at Thr145. N-linked (GlcNAc...) asparagine glycosylation occurs at Asn172. Residues 203–223 traverse the membrane as a helical segment; it reads IYIGAGICAGLALALIFGALI. The Cytoplasmic portion of the chain corresponds to 224 to 301; the sequence is FKWYSHSKEK…QPLGCRFAMP (78 aa). The residue at position 265 (Tyr265) is a Phosphotyrosine; by ITK. Cys296 carries the S-palmitoyl cysteine lipid modification.

Belongs to the immunoglobulin superfamily. TIM family. Interacts with HMGB1; impairs HMGB1 binding to B-DNA and likely HMGB1-mediated innate immune response. Interacts with BAG6. Interacts (phosphorylated) with PIK3R1 and PIK3R2. Interacts (not dependent on its phosphorylation status) with FYN. Interacts (in basal state T-cells) with VAV1; AKT1/2, LCP2, ZAP70, SYK, PIK3R1, FYN, SH3BP2 and SH2D2A. Interacts (in activated T-cells) with LCK and PLCG. Interacts with ILF3; this interaction promotes ILF3 ubiquitination and degradation. In terms of processing, O-glycosylated with core 1 or possibly core 8 glycans. Phosphorylated on tyrosine residues; modestly increased after TCR/CD28 stimulation. Can be phosphorylated in the cytoplasmic domain by FYN. Phosphorylation at Tyr-265 is increased by stimulation with ligand LGALS9. Post-translationally, palmitoylated by ZDHHC9 at Cys-296; palmitoylation stabilizes HAVCR2 by preventing binding to E3 ubiquitin ligase SYVN1, thereby suppressing its polyubiquitination and degradation. In terms of processing, ubiquitinated by SYVN1, leading to polyubiquitination and proteasomal degradation. In terms of tissue distribution, expressed in T-helper type 1 (Th1) lymphocytes. Expressed on regulatory T (Treg) cells after TCR stimulation. Expressed in dendritic cells and natural killer (NK) cells. Expressed in epithelial tissues. Expression is increased on CD4+ and CD8+ T-cells in chronic hepatitis C virus (HCV) infection. In progressive HIV-1 infection, expression is up-regulated on HIV-1-specific CD8 T-cells.

The protein resides in the cell membrane. Its subcellular location is the cell junction. Functionally, cell surface receptor implicated in modulating innate and adaptive immune responses. Generally accepted to have an inhibiting function. Reports on stimulating functions suggest that the activity may be influenced by the cellular context and/or the respective ligand. Regulates macrophage activation. Inhibits T-helper type 1 lymphocyte (Th1)-mediated auto- and alloimmune responses and promotes immunological tolerance. In CD8+ cells attenuates TCR-induced signaling, specifically by blocking NF-kappaB and NFAT promoter activities resulting in the loss of IL-2 secretion. The function may implicate its association with LCK proposed to impair phosphorylation of TCR subunits, and/or LGALS9-dependent recruitment of PTPRC to the immunological synapse. In contrast, shown to activate TCR-induced signaling in T-cells probably implicating ZAP70, LCP2, LCK and FYN. Expressed on Treg cells can inhibit Th17 cell responses. Receptor for LGALS9. Binding to LGALS9 is believed to result in suppression of T-cell responses; the resulting apoptosis of antigen-specific cells may implicate HAVCR2 phosphorylation and disruption of its association with BAG6. Binding to LGALS9 is proposed to be involved in innate immune response to intracellular pathogens. Expressed on Th1 cells interacts with LGALS9 expressed on Mycobacterium tuberculosis-infected macrophages to stimulate antibactericidal activity including IL-1 beta secretion and to restrict intracellular bacterial growth. However, the function as receptor for LGALS9 has been challenged. Also reported to enhance CD8+ T-cell responses to an acute infection such as by Listeria monocytogenes. Receptor for phosphatidylserine (PtSer); PtSer-binding is calcium-dependent. May recognize PtSer on apoptotic cells leading to their phagocytosis. Mediates the engulfment of apoptotic cells by dendritic cells. Expressed on T-cells, promotes conjugation but not engulfment of apoptotic cells. Expressed on dendritic cells (DCs) positively regulates innate immune response and in synergy with Toll-like receptors promotes secretion of TNF-alpha. In tumor-imfiltrating DCs suppresses nucleic acid-mediated innate immune repsonse by interaction with HMGB1 and interfering with nucleic acid-sensing and trafficking of nucleid acids to endosomes. Expressed on natural killer (NK) cells acts as a coreceptor to enhance IFN-gamma production in response to LGALS9. In contrast, shown to suppress NK cell-mediated cytotoxicity. Negatively regulates NK cell function in LPS-induced endotoxic shock. In Homo sapiens (Human), this protein is Hepatitis A virus cellular receptor 2 (HAVCR2).